The following is a 737-amino-acid chain: NAD(P)H-quinone oxidoreductase subunit 5, chloroplastic (737 aa).

The next 16 helical transmembrane spans lie at 9 to 29 (WIIP…LILF), 40 to 60 (WAFQ…YLSI), 89 to 109 (IDPL…MVLI), 125 to 145 (FAYM…SNLI), 147 to 167 (IYIF…FWFT), 185 to 205 (GDFG…SFEF), 219 to 239 (NELN…GAVA), 258 to 278 (TPIS…FLVA), 286 to 306 (VIPY…LLGA), 327 to 347 (LGYM…FHLI), 354 to 374 (ALLF…VGYS), 396 to 416 (ITFL…CFWS), 425 to 445 (WLYS…TAFY), 543 to 563 (LFPI…GIPF), 602 to 622 (VVSV…YKPI), and 717 to 737 (SYLF…YLLF).

The protein belongs to the complex I subunit 5 family. In terms of assembly, NDH is composed of at least 16 different subunits, 5 of which are encoded in the nucleus.

The protein resides in the plastid. Its subcellular location is the chloroplast thylakoid membrane. It carries out the reaction a plastoquinone + NADH + (n+1) H(+)(in) = a plastoquinol + NAD(+) + n H(+)(out). The catalysed reaction is a plastoquinone + NADPH + (n+1) H(+)(in) = a plastoquinol + NADP(+) + n H(+)(out). NDH shuttles electrons from NAD(P)H:plastoquinone, via FMN and iron-sulfur (Fe-S) centers, to quinones in the photosynthetic chain and possibly in a chloroplast respiratory chain. The immediate electron acceptor for the enzyme in this species is believed to be plastoquinone. Couples the redox reaction to proton translocation, and thus conserves the redox energy in a proton gradient. The protein is NAD(P)H-quinone oxidoreductase subunit 5, chloroplastic (ndhF) of Solanum lycopersicum (Tomato).